Reading from the N-terminus, the 670-residue chain is UvrABC system protein B (670 aa).

In terms of domain architecture, Helicase ATP-binding spans 51–433 (EGLKKREQFQ…SARIVEQIIR (383 aa)). Residue 64-71 (GVTGSGKT) participates in ATP binding. Residues 117–140 (YYDYYQPESYLPAKDQYIEKDAQI) carry the Beta-hairpin motif. Positions 453-612 (DVMQEIRKIV…IVPKTIRKPI (160 aa)) constitute a Helicase C-terminal domain. Positions 631 to 666 (PNVIIELDAEMREAADRLDFERAIQLRELIKKLEKE) constitute a UVR domain.

It belongs to the UvrB family. As to quaternary structure, forms a heterotetramer with UvrA during the search for lesions. Interacts with UvrC in an incision complex.

It is found in the cytoplasm. In terms of biological role, the UvrABC repair system catalyzes the recognition and processing of DNA lesions. A damage recognition complex composed of 2 UvrA and 2 UvrB subunits scans DNA for abnormalities. Upon binding of the UvrA(2)B(2) complex to a putative damaged site, the DNA wraps around one UvrB monomer. DNA wrap is dependent on ATP binding by UvrB and probably causes local melting of the DNA helix, facilitating insertion of UvrB beta-hairpin between the DNA strands. Then UvrB probes one DNA strand for the presence of a lesion. If a lesion is found the UvrA subunits dissociate and the UvrB-DNA preincision complex is formed. This complex is subsequently bound by UvrC and the second UvrB is released. If no lesion is found, the DNA wraps around the other UvrB subunit that will check the other stand for damage. This Methanosarcina acetivorans (strain ATCC 35395 / DSM 2834 / JCM 12185 / C2A) protein is UvrABC system protein B.